We begin with the raw amino-acid sequence, 172 residues long: Transcriptional repressor NrdR (172 aa).

A zinc finger lies at 3–34 (CPFCGAPDTRVIDSRLAGEGDQVRRRRECLSC). The region spanning 49 to 139 (PRVVKRDGSR…VYLSFADVQA (91 aa)) is the ATP-cone domain.

It belongs to the NrdR family. Zn(2+) is required as a cofactor.

In terms of biological role, negatively regulates transcription of bacterial ribonucleotide reductase nrd genes and operons by binding to NrdR-boxes. This chain is Transcriptional repressor NrdR, found in Thioalkalivibrio sulfidiphilus (strain HL-EbGR7).